Here is a 255-residue protein sequence, read N- to C-terminus: 4-diphosphocytidyl-2-C-methyl-D-erythritol kinase (255 aa).

The active site involves Lys6. 95 to 105 (PVCAGLGGGSS) lines the ATP pocket. Residue Asp137 is part of the active site.

It belongs to the GHMP kinase family. IspE subfamily.

It carries out the reaction 4-CDP-2-C-methyl-D-erythritol + ATP = 4-CDP-2-C-methyl-D-erythritol 2-phosphate + ADP + H(+). The protein operates within isoprenoid biosynthesis; isopentenyl diphosphate biosynthesis via DXP pathway; isopentenyl diphosphate from 1-deoxy-D-xylulose 5-phosphate: step 3/6. Its function is as follows. Catalyzes the phosphorylation of the position 2 hydroxy group of 4-diphosphocytidyl-2C-methyl-D-erythritol. The chain is 4-diphosphocytidyl-2-C-methyl-D-erythritol kinase from Campylobacter jejuni subsp. jejuni serotype O:23/36 (strain 81-176).